Consider the following 426-residue polypeptide: Tyrosine--tRNA ligase (426 aa).

An L-tyrosine-binding site is contributed by tyrosine 35. Positions 40-49 match the 'HIGH' region motif; the sequence is PTAPSLHIGH. Tyrosine 174 and glutamine 178 together coordinate L-tyrosine. Residues 234-238 carry the 'KMSKS' region motif; that stretch reads KFGKT. Residue lysine 237 participates in ATP binding. The region spanning 358-418 is the S4 RNA-binding domain; it reads PRVVDALVAT…WAVIRRGRRA (61 aa).

The protein belongs to the class-I aminoacyl-tRNA synthetase family. TyrS type 1 subfamily. In terms of assembly, homodimer.

It is found in the cytoplasm. The catalysed reaction is tRNA(Tyr) + L-tyrosine + ATP = L-tyrosyl-tRNA(Tyr) + AMP + diphosphate + H(+). Catalyzes the attachment of tyrosine to tRNA(Tyr) in a two-step reaction: tyrosine is first activated by ATP to form Tyr-AMP and then transferred to the acceptor end of tRNA(Tyr). The protein is Tyrosine--tRNA ligase of Acidothermus cellulolyticus (strain ATCC 43068 / DSM 8971 / 11B).